Reading from the N-terminus, the 696-residue chain is MKFAEHLSAHITPEWRKQYIQYEAFKDMLYSAQDQAPSVEVTDEDTVKRYFAKFEEKFFQTCEKELAKINTFYSEKLAEAQRRFATLQNELQSSLDVQKESSGVTTLRQRRKPVFHLSHEERVQHRNIKDLKLAFSEFYLSLILLQNYQNLNFTGFRKILKKHDKILETSRGADWRVIHVEVAPFYTCKKINQLISETEAVVTNELEDGDRQKAMKRLRVPPLGAAQPAPAWTTFRVGLFCGIFIVLNITLVFAAVFKLETDRTVWPLIRIYRGGFLLIEFLFLLGINTYGWRQAGVNHVLIFELNPRNNLSHQHLFEIAGFLGILWCLSLLACFFAPISIIPIYVYPLALYGFMVFFLINPTKTFYYKSRFWLLKLLFRVFTAPFHKVGFADFWLADQLNSLSVILMDLEYMICFYSFELKWDESKGLLPNDPQGPEFCHKYTYGVRAIVQCIPAWLRFIQCLRRYRDTRRAFPHLVNAGKYSTTFFTVTFAALYSTHKEQNHPDYKVFFYLWVFFCIISSCYTLIWDLKMDWGLFDKNAGENTFLREEIVYPQKAYYYCAIIEDVILRFAWTIQISITVTTFKPHVGDIIATVFAPLEVFRRFVWNFFRLENEHLNNCGEFRAVRDISVAPLNADDQTLLEQMMDQEDGVRNRQKNRSWKYNQSISLRRPRLASQSKARDTKVLIEDTDDEANT.

The Cytoplasmic portion of the chain corresponds to methionine 1–proline 228. An SPX domain is found at lysine 2–glycine 224. The interval lysine 158 to lysine 165 is important for inositol polyphosphate binding. A helical transmembrane segment spans residues alanine 229–leucine 259. The Extracellular portion of the chain corresponds to glutamate 260 to threonine 264. A helical membrane pass occupies residues valine 265 to glycine 296. At valine 297 to asparagine 309 the chain is on the cytoplasmic side. A helical membrane pass occupies residues asparagine 310–alanine 337. Topologically, residues proline 338–proline 343 are extracellular. The chain crosses the membrane as a helical span at residues isoleucine 344–threonine 365. Residues phenylalanine 366–threonine 383 constitute an intramembrane region (helical). The Cytoplasmic segment spans residues alanine 384–lysine 388. A discontinuously helical transmembrane segment spans residues valine 389–lysine 422. Phosphate contacts are provided by aspartate 398 and asparagine 401. At tryptophan 423 to leucine 429 the chain is on the extracellular side. A discontinuously helical transmembrane segment spans residues leucine 430–arginine 471. The region spanning phenylalanine 439–glutamate 643 is the EXS domain. Arginine 472 is a topological domain (cytoplasmic). The chain crosses the membrane as a helical span at residues alanine 473–asparagine 503. Residues lysine 482 and tyrosine 483 each contribute to the phosphate site. Topologically, residues histidine 504–aspartate 506 are extracellular. The helical transmembrane segment at tyrosine 507–tryptophan 534 threads the bilayer. The Cytoplasmic segment spans residues glycine 535–tyrosine 553. The discontinuously helical transmembrane segment at proline 554 to lysine 585 threads the bilayer. Residue arginine 570 participates in phosphate binding. At proline 586 to histidine 587 the chain is on the extracellular side. Residues valine 588–valine 626 traverse the membrane as a helical segment. Residues arginine 603 and arginine 604 each contribute to the phosphate site. Residues arginine 627–threonine 696 lie on the Cytoplasmic side of the membrane. Position 668 is a phosphoserine (serine 668). The segment at proline 672 to threonine 696 is disordered. Position 690 is a phosphothreonine (threonine 690).

The protein belongs to the SYG1 (TC 2.A.94) family. As to quaternary structure, homodimer.

Its subcellular location is the cell membrane. The catalysed reaction is phosphate(in) = phosphate(out). Functionally, inorganic ion transporter that mediates phosphate ion export across plasma membrane. Plays a major role in phosphate homeostasis, preventing intracellular phosphate accumulation and possible calcium phosphate precipitation, ultimately preserving calcium signaling. Binds inositol hexakisphosphate (Ins6P) and similar inositol polyphosphates, such as 5-diphospho-inositol pentakisphosphate (5-InsP7), which are important intracellular signaling molecules involved in regulation of phosphate flux. The polypeptide is Solute carrier family 53 member 1 (Xpr1) (Mus pahari (Gairdner's shrew-mouse)).